The following is a 300-amino-acid chain: Mycothiol acetyltransferase (300 aa).

N-acetyltransferase domains follow at residues 4-140 (IDWR…RPLT) and 151-300 (VRLA…AVAD). 1D-myo-inositol 2-(L-cysteinylamino)-2-deoxy-alpha-D-glucopyranoside is bound at residue Asp36. Position 79 to 81 (79 to 81 (LVV)) interacts with acetyl-CoA. Glu178, Lys219, and Glu227 together coordinate 1D-myo-inositol 2-(L-cysteinylamino)-2-deoxy-alpha-D-glucopyranoside. 231-233 (VGV) provides a ligand contact to acetyl-CoA. 1D-myo-inositol 2-(L-cysteinylamino)-2-deoxy-alpha-D-glucopyranoside is bound at residue Tyr269. 274-279 (NGAAVK) is an acetyl-CoA binding site.

Belongs to the acetyltransferase family. MshD subfamily. In terms of assembly, monomer.

The enzyme catalyses 1D-myo-inositol 2-(L-cysteinylamino)-2-deoxy-alpha-D-glucopyranoside + acetyl-CoA = mycothiol + CoA + H(+). Catalyzes the transfer of acetyl from acetyl-CoA to desacetylmycothiol (Cys-GlcN-Ins) to form mycothiol. In Mycobacterium sp. (strain MCS), this protein is Mycothiol acetyltransferase.